The primary structure comprises 526 residues: Osmo-independent choline transporter BetT1 (526 aa).

Residues 1–17 (MWSKRDEQKTYPPIRLN) are Cytoplasmic-facing. Residues 18-38 (PFVFWSSAISISIFGMLFVLF) form a helical membrane-spanning segment. The Periplasmic portion of the chain corresponds to 39–56 (PETSQHGLTWIQQQVNQL). A helical transmembrane segment spans residues 57–77 (FGWYYMLVIILSLGFVAWLAF). At 78 to 93 (SQVGNIPLGKAQDKPE) the chain is on the cytoplasmic side. A helical membrane pass occupies residues 94–114 (FGYLVWTSMLFSAGIGIALLY). At 115 to 148 (YGVAEPVDHFLRPPEGQGGTVEAAQNAMMYSFLH) the chain is on the periplasmic side. A helical transmembrane segment spans residues 149 to 169 (WGIHGWVLYALVGVTLGYFAF). Residues 170–200 (RRDLPLALRSALYPIFGERIHGLVGHMVDGF) lie on the Cytoplasmic side of the membrane. The helical transmembrane segment at 201 to 221 (GILATIISLVTNLGIGALVMI) threads the bilayer. The Periplasmic segment spans residues 222-236 (SGISYLFPDLPNTSS). The chain crosses the membrane as a helical span at residues 237–257 (TLVVTVIMMMLVATLTTVIGI). Topologically, residues 258–272 (EKGLAWLSRINLRLL) are cytoplasmic. A helical transmembrane segment spans residues 273–293 (YLLLLFVFLTGPTNHLLNGLV). At 294–323 (QNTGDYLSHFVQKSFDLYLYDKNATGWLAS) the chain is on the periplasmic side. A helical membrane pass occupies residues 324–344 (WTIFYWAWWIAWAPFVGMFIA). Residues 345 to 354 (RISKGRTIRE) are Cytoplasmic-facing. A helical membrane pass occupies residues 355–375 (VVLGVCLIPLGFTLAWISIFG). At 376–417 (NTAIDLILNHGQQIIGSLVIQDPALSLFKLLEYLPFHPYVAG) the chain is on the periplasmic side. The helical transmembrane segment at 418-438 (IVVVICFVLFLTPVGSGTLMI) threads the bilayer. The Cytoplasmic segment spans residues 439–457 (ANLSSQGGSSDSDSPIWLR). The helical transmembrane segment at 458 to 478 (VFWSIAITIVSIGLLLAGSFS) threads the bilayer. The Periplasmic segment spans residues 479 to 482 (AMQS). A helical membrane pass occupies residues 483–503 (AVVLCGLPFSVILLLYMFGLA). The Cytoplasmic segment spans residues 504–526 (KALKQETQQPVVESHTTETSGSD).

The protein belongs to the BCCT transporter (TC 2.A.15) family.

It is found in the cell inner membrane. Its function is as follows. Sodium-independent high-affinity choline uptake system. Uptake is not proton coupled. May play a role in metabolic adaptation to choline-containing environments. This chain is Osmo-independent choline transporter BetT1, found in Acinetobacter baylyi (strain ATCC 33305 / BD413 / ADP1).